The primary structure comprises 135 residues: Interleukin-4 (135 aa).

An N-terminal signal peptide occupies residues 1–24 (MGLTSQLIPALVCLLVCTSHFVHG). Cystine bridges form between Cys27–Cys135, Cys48–Cys85, and Cys70–Cys105. 2 N-linked (GlcNAc...) asparagine glycosylation sites follow: Asn62 and Asn96.

Belongs to the IL-4/IL-13 family.

The protein localises to the secreted. Functionally, participates in at least several B-cell activation processes as well as of other cell types. It is a costimulator of DNA-synthesis. It induces the expression of class II MHC molecules on resting B-cells. It enhances both secretion and cell surface expression of IgE and IgG1. It also regulates the expression of the low affinity Fc receptor for IgE (CD23) on both lymphocytes and monocytes. Positively regulates IL31RA expression in macrophages. Stimulates autophagy in dendritic cells by interfering with mTORC1 signaling and through the induction of RUFY4. This chain is Interleukin-4 (IL4), found in Capra hircus (Goat).